The primary structure comprises 483 residues: MKLGEFADILPLSGSIAGETTISGLASDSRRVNAGDLFFALQGSKADGAAYAADAAGRGAVAIIARPGTVGDVGVPVIEADDPRHVLALASARLYGAQPATMVAVTGTSGKTSVAAFTRQIWEKAGLAAASIGTTGVVAPGRDEYGELTTPDPVSLHKLLRELADAGVTHASMEASSHGLDQRRLDGVKLAAGGFTNLGRDHMDYHPTVEHYHQSKMRLFKTLLPKGAPAVIFADDPWSEPTEKVALAAGLQLLTVGRRGTFLTIKRVEHERHRQRTEIEHEGMIYDIMLPLAGDFQVGNALVAAGLAISTGLPADKAVAALEHLKGASGRLELTGTTEDGAQIYVDYAHKPDALENVLQAVRPFTTGRVIVVFGCGGDRDPGKRPIMGEIARRLADVVIVTDDNPRSEVPAEIRRAILEAVPEATEIGDRREAIRTAVAMLNSGDTLIVAGKGHEIGQEIAGTKLPFSDHEEVRRALKERTA.

Residue S29 coordinates UDP-N-acetyl-alpha-D-muramoyl-L-alanyl-D-glutamate. ATP is bound at residue 107–113; sequence GTSGKTS. Residues 149 to 150, S176, Q182, and R184 each bind UDP-N-acetyl-alpha-D-muramoyl-L-alanyl-D-glutamate; that span reads TT. The residue at position 216 (K216) is an N6-carboxylysine. Residues R380, 404–407, G452, and E456 contribute to the meso-2,6-diaminopimelate site; that span reads DNPR. The Meso-diaminopimelate recognition motif signature appears at 404–407; it reads DNPR.

Belongs to the MurCDEF family. MurE subfamily. Mg(2+) serves as cofactor. Carboxylation is probably crucial for Mg(2+) binding and, consequently, for the gamma-phosphate positioning of ATP.

Its subcellular location is the cytoplasm. The enzyme catalyses UDP-N-acetyl-alpha-D-muramoyl-L-alanyl-D-glutamate + meso-2,6-diaminopimelate + ATP = UDP-N-acetyl-alpha-D-muramoyl-L-alanyl-gamma-D-glutamyl-meso-2,6-diaminopimelate + ADP + phosphate + H(+). It participates in cell wall biogenesis; peptidoglycan biosynthesis. Functionally, catalyzes the addition of meso-diaminopimelic acid to the nucleotide precursor UDP-N-acetylmuramoyl-L-alanyl-D-glutamate (UMAG) in the biosynthesis of bacterial cell-wall peptidoglycan. This chain is UDP-N-acetylmuramoyl-L-alanyl-D-glutamate--2,6-diaminopimelate ligase, found in Chelativorans sp. (strain BNC1).